A 107-amino-acid chain; its full sequence is MFQFAKFSKSKERRLATELGYGFPIGDPWITDGISPWPFASESVLPSQCPGIHPMHSFRSCTQGTLNTTKISMKLTISDCGFEPLTEGFTVLHSTRATTCYHFLFNS.

The protein resides in the mitochondrion. This is an uncharacterized protein from Arabidopsis thaliana (Mouse-ear cress).